The following is a 213-amino-acid chain: Proteasome subunit beta 1 (213 aa).

Positions 1-18 (MVFIAVFNGVFAMSSLPG) are cleaved as a propeptide — removed in mature form; by autocatalysis. Threonine 19 functions as the Nucleophile in the catalytic mechanism.

It belongs to the peptidase T1B family. In terms of assembly, the 20S proteasome core is composed of 14 alpha and 14 beta subunits that assemble into four stacked heptameric rings, resulting in a barrel-shaped structure. The two inner rings, each composed of seven catalytic beta subunits, are sandwiched by two outer rings, each composed of seven alpha subunits. The catalytic chamber with the active sites is on the inside of the barrel. Has a gated structure, the ends of the cylinder being occluded by the N-termini of the alpha-subunits. Is capped at one or both ends by the proteasome regulatory ATPase, PAN.

The protein resides in the cytoplasm. The enzyme catalyses Cleavage of peptide bonds with very broad specificity.. With respect to regulation, the formation of the proteasomal ATPase PAN-20S proteasome complex, via the docking of the C-termini of PAN into the intersubunit pockets in the alpha-rings, triggers opening of the gate for substrate entry. Interconversion between the open-gate and close-gate conformations leads to a dynamic regulation of the 20S proteasome proteolysis activity. In terms of biological role, component of the proteasome core, a large protease complex with broad specificity involved in protein degradation. The protein is Proteasome subunit beta 1 of Staphylothermus marinus (strain ATCC 43588 / DSM 3639 / JCM 9404 / F1).